The primary structure comprises 1286 residues: Ankyrin-repeat and fibronectin type III domain-containing 1 (1286 aa).

2 ANK repeats span residues 274-303 (QGNE…PEEL) and 311-340 (EGLT…RESP). Residues 411-507 (VPANACLMVS…TTTPVCASPS (97 aa)) form the Fibronectin type-III domain. The segment at 748–755 (GLYLGYLK) is highly conserved peptide sequence. The segment covering 999–1011 (SSHIDCLPSTSPS) has biased composition (polar residues). Disordered regions lie at residues 999 to 1032 (SSHI…EEGC), 1086 to 1106 (KASM…DTDH), 1187 to 1207 (AEDP…RGLP), and 1242 to 1286 (AGQD…SSML). A compositionally biased stretch (low complexity) spans 1260-1277 (SSLPSSTSSEMSPDPTSP).

Expressed in both the suprachiasmatic nucleus and dorsal medial hypothalamus.

May play a role in neuronal function. The polypeptide is Ankyrin-repeat and fibronectin type III domain-containing 1 (Mus musculus (Mouse)).